A 204-amino-acid polypeptide reads, in one-letter code: Dephospho-CoA kinase (204 aa).

Positions 13 to 204 constitute a DPCK domain; that stretch reads RIGLTGGIAS…LWKNTIKKLV (192 aa). 21–26 contributes to the ATP binding site; the sequence is ASGKST.

It belongs to the CoaE family.

Its subcellular location is the cytoplasm. The catalysed reaction is 3'-dephospho-CoA + ATP = ADP + CoA + H(+). It functions in the pathway cofactor biosynthesis; coenzyme A biosynthesis; CoA from (R)-pantothenate: step 5/5. In terms of biological role, catalyzes the phosphorylation of the 3'-hydroxyl group of dephosphocoenzyme A to form coenzyme A. In Prochlorococcus marinus subsp. pastoris (strain CCMP1986 / NIES-2087 / MED4), this protein is Dephospho-CoA kinase.